Here is a 218-residue protein sequence, read N- to C-terminus: Probable 3-keto-L-gulonate-6-phosphate decarboxylase (218 aa).

Asp-11 is a substrate binding site. Glu-33 and Asp-62 together coordinate Mg(2+). Residue Arg-194 participates in substrate binding.

Belongs to the HPS/KGPDC family. KGPDC subfamily. Mg(2+) is required as a cofactor.

The enzyme catalyses 3-dehydro-L-gulonate 6-phosphate + H(+) = L-xylulose 5-phosphate + CO2. The protein operates within cofactor degradation; L-ascorbate degradation; D-xylulose 5-phosphate from L-ascorbate: step 2/4. Functionally, catalyzes the decarboxylation of 3-keto-L-gulonate-6-P into L-xylulose-5-P. Is involved in the anaerobic L-ascorbate utilization. The sequence is that of Probable 3-keto-L-gulonate-6-phosphate decarboxylase (ulaD) from Mycoplasma pneumoniae (strain ATCC 29342 / M129 / Subtype 1) (Mycoplasmoides pneumoniae).